Reading from the N-terminus, the 51-residue chain is Large ribosomal subunit protein bL33 (51 aa).

Belongs to the bacterial ribosomal protein bL33 family.

The polypeptide is Large ribosomal subunit protein bL33 (Idiomarina loihiensis (strain ATCC BAA-735 / DSM 15497 / L2-TR)).